The following is a 54-amino-acid chain: Large ribosomal subunit protein bL33B (54 aa).

This sequence belongs to the bacterial ribosomal protein bL33 family.

The polypeptide is Large ribosomal subunit protein bL33B (Mycobacterium sp. (strain JLS)).